We begin with the raw amino-acid sequence, 290 residues long: Shikimate dehydrogenase (NADP(+)) (290 aa).

Shikimate is bound by residues 24-26 (SLS) and T71. K75 acts as the Proton acceptor in catalysis. Shikimate is bound by residues N96 and D111. NADP(+)-binding positions include 136–140 (GAGGA), 160–165 (NRTVDR), and L233. Y235 contributes to the shikimate binding site. Residue G256 participates in NADP(+) binding.

This sequence belongs to the shikimate dehydrogenase family. In terms of assembly, homodimer.

It catalyses the reaction shikimate + NADP(+) = 3-dehydroshikimate + NADPH + H(+). The protein operates within metabolic intermediate biosynthesis; chorismate biosynthesis; chorismate from D-erythrose 4-phosphate and phosphoenolpyruvate: step 4/7. In terms of biological role, involved in the biosynthesis of the chorismate, which leads to the biosynthesis of aromatic amino acids. Catalyzes the reversible NADPH linked reduction of 3-dehydroshikimate (DHSA) to yield shikimate (SA). The chain is Shikimate dehydrogenase (NADP(+)) from Methanopyrus kandleri (strain AV19 / DSM 6324 / JCM 9639 / NBRC 100938).